The chain runs to 155 residues: MADLSALKEIATTAEPAAPVHVKKVDAQGRSYATGKRKDAVARVWVKAGSGKITVNGKPFSAYFARPVLQMILQQPIVAAARDGQFDVDATVAGGGLSGQAGAVRHGIAKALTYFEPGLRSVLKRGGFLTRDSRVVERKKYGRAKARRSFQFSKR.

This sequence belongs to the universal ribosomal protein uS9 family.

This Sinorhizobium fredii (strain NBRC 101917 / NGR234) protein is Small ribosomal subunit protein uS9.